A 429-amino-acid chain; its full sequence is Gamma-glutamyl phosphate reductase (429 aa).

This sequence belongs to the gamma-glutamyl phosphate reductase family.

It localises to the cytoplasm. It catalyses the reaction L-glutamate 5-semialdehyde + phosphate + NADP(+) = L-glutamyl 5-phosphate + NADPH + H(+). The protein operates within amino-acid biosynthesis; L-proline biosynthesis; L-glutamate 5-semialdehyde from L-glutamate: step 2/2. Its function is as follows. Catalyzes the NADPH-dependent reduction of L-glutamate 5-phosphate into L-glutamate 5-semialdehyde and phosphate. The product spontaneously undergoes cyclization to form 1-pyrroline-5-carboxylate. This is Gamma-glutamyl phosphate reductase from Bradyrhizobium sp. (strain ORS 278).